The primary structure comprises 292 residues: Feruloyl esterase B (292 aa).

An N-terminal signal peptide occupies residues 1–18 (MLPRTLLGLALTAATGLC). Asn-88, Asn-117, Asn-179, and Asn-245 each carry an N-linked (GlcNAc...) asparagine glycan.

It belongs to the carbohydrate esterase 1 (CE1) family. Feruloyl esterase type B subfamily.

It localises to the secreted. It catalyses the reaction feruloyl-polysaccharide + H2O = ferulate + polysaccharide.. Functionally, involved in degradation of plant cell walls. Hydrolyzes of the feruloyl-arabinose ester bond in arabinoxylans as well as the feruloyl-galactose and feruloyl-arabinose ester bonds in pectin. This chain is Feruloyl esterase B (fae-1), found in Neurospora crassa (strain ATCC 24698 / 74-OR23-1A / CBS 708.71 / DSM 1257 / FGSC 987).